A 98-amino-acid chain; its full sequence is Large ribosomal subunit protein uL23 (98 aa).

Belongs to the universal ribosomal protein uL23 family. In terms of assembly, part of the 50S ribosomal subunit. Contacts protein L29, and trigger factor when it is bound to the ribosome.

In terms of biological role, one of the early assembly proteins it binds 23S rRNA. One of the proteins that surrounds the polypeptide exit tunnel on the outside of the ribosome. Forms the main docking site for trigger factor binding to the ribosome. This is Large ribosomal subunit protein uL23 from Streptococcus sanguinis (strain SK36).